Consider the following 20-residue polypeptide: Protein PR-L2 (20 aa).

The disordered stretch occupies residues 1–20; sequence SVFAFENEQSSTIAPARLYK.

This sequence belongs to the BetVI family.

This chain is Protein PR-L2, found in Lupinus luteus (European yellow lupine).